The primary structure comprises 390 residues: Elongation factor Ts 2, mitochondrial (390 aa).

The transit peptide at 1 to 24 directs the protein to the mitochondrion; the sequence is MMIFSTAVLRLCATSRIGAVTKRA. Low complexity predominate over residues 30–40; sequence SSASSSSSSSS. Residues 30-54 are disordered; it reads SSASSSSSSSSPTQSMPPQRYTHHQ.

This sequence belongs to the EF-Ts family.

It is found in the mitochondrion. In terms of biological role, associates with the EF-Tu.GDP complex and induces the exchange of GDP to GTP. It remains bound to the aminoacyl-tRNA.EF-Tu.GTP complex up to the GTP hydrolysis stage on the ribosome. This Thalassiosira pseudonana (Marine diatom) protein is Elongation factor Ts 2, mitochondrial.